The following is a 230-amino-acid chain: Ion-translocating oxidoreductase complex subunit E (230 aa).

5 helical membrane passes run 22–42 (LLGL…LGLG), 63–83 (TPAE…VSAV), 86–106 (LINA…PLIV), 125–145 (WLSA…MFVL), and 182–202 (PFLL…MLAV).

This sequence belongs to the NqrDE/RnfAE family. The complex is composed of six subunits: RsxA, RsxB, RsxC, RsxD, RsxE and RsxG.

Its subcellular location is the cell inner membrane. Its function is as follows. Part of a membrane-bound complex that couples electron transfer with translocation of ions across the membrane. Required to maintain the reduced state of SoxR. The chain is Ion-translocating oxidoreductase complex subunit E from Salmonella paratyphi A (strain ATCC 9150 / SARB42).